The sequence spans 225 residues: Octanoyltransferase (225 aa).

The 183-residue stretch at 43–225 folds into the BPL/LPL catalytic domain; the sequence is GTAPELVWLL…KTFRDVFGRG (183 aa). Substrate-binding positions include 82–89, 157–159, and 170–172; these read RGGQYTYH, AIG, and GVS. Cys188 acts as the Acyl-thioester intermediate in catalysis.

It belongs to the LipB family.

The protein localises to the cytoplasm. It catalyses the reaction octanoyl-[ACP] + L-lysyl-[protein] = N(6)-octanoyl-L-lysyl-[protein] + holo-[ACP] + H(+). Its pathway is protein modification; protein lipoylation via endogenous pathway; protein N(6)-(lipoyl)lysine from octanoyl-[acyl-carrier-protein]: step 1/2. Catalyzes the transfer of endogenously produced octanoic acid from octanoyl-acyl-carrier-protein onto the lipoyl domains of lipoate-dependent enzymes. Lipoyl-ACP can also act as a substrate although octanoyl-ACP is likely to be the physiological substrate. The protein is Octanoyltransferase of Parvibaculum lavamentivorans (strain DS-1 / DSM 13023 / NCIMB 13966).